Reading from the N-terminus, the 212-residue chain is Pyridoxine/pyridoxamine 5'-phosphate oxidase (212 aa).

Substrate-binding positions include 8–11 and lysine 66; that span reads RKNY. FMN contacts are provided by residues 61 to 66, 76 to 77, arginine 82, lysine 83, and glutamine 105; these read RIVLIK and FT. Substrate is bound by residues tyrosine 123, arginine 127, and serine 131. FMN is bound by residues 140-141 and tryptophan 184; that span reads QS. 190–192 provides a ligand contact to substrate; that stretch reads RLH. Arginine 194 is an FMN binding site.

Belongs to the pyridoxamine 5'-phosphate oxidase family. As to quaternary structure, homodimer. FMN is required as a cofactor.

It carries out the reaction pyridoxamine 5'-phosphate + O2 + H2O = pyridoxal 5'-phosphate + H2O2 + NH4(+). The enzyme catalyses pyridoxine 5'-phosphate + O2 = pyridoxal 5'-phosphate + H2O2. Its pathway is cofactor metabolism; pyridoxal 5'-phosphate salvage; pyridoxal 5'-phosphate from pyridoxamine 5'-phosphate: step 1/1. It functions in the pathway cofactor metabolism; pyridoxal 5'-phosphate salvage; pyridoxal 5'-phosphate from pyridoxine 5'-phosphate: step 1/1. In terms of biological role, catalyzes the oxidation of either pyridoxine 5'-phosphate (PNP) or pyridoxamine 5'-phosphate (PMP) into pyridoxal 5'-phosphate (PLP). The protein is Pyridoxine/pyridoxamine 5'-phosphate oxidase of Paraburkholderia phymatum (strain DSM 17167 / CIP 108236 / LMG 21445 / STM815) (Burkholderia phymatum).